A 78-amino-acid polypeptide reads, in one-letter code: Acyl carrier protein (78 aa).

The Carrier domain maps to 1–76 (MALFEDIQAV…DVVKYIEDNK (76 aa)). Residue Ser36 is modified to O-(pantetheine 4'-phosphoryl)serine.

This sequence belongs to the acyl carrier protein (ACP) family. Post-translationally, 4'-phosphopantetheine is transferred from CoA to a specific serine of apo-ACP by AcpS. This modification is essential for activity because fatty acids are bound in thioester linkage to the sulfhydryl of the prosthetic group.

The protein localises to the cytoplasm. Its pathway is lipid metabolism; fatty acid biosynthesis. Carrier of the growing fatty acid chain in fatty acid biosynthesis. This chain is Acyl carrier protein, found in Helicobacter pylori (strain G27).